Here is a 147-residue protein sequence, read N- to C-terminus: D-aminoacyl-tRNA deacylase (147 aa).

The Gly-cisPro motif, important for rejection of L-amino acids signature appears at 136 to 137 (GP).

It belongs to the DTD family. As to quaternary structure, homodimer.

It is found in the cytoplasm. The enzyme catalyses glycyl-tRNA(Ala) + H2O = tRNA(Ala) + glycine + H(+). The catalysed reaction is a D-aminoacyl-tRNA + H2O = a tRNA + a D-alpha-amino acid + H(+). In terms of biological role, an aminoacyl-tRNA editing enzyme that deacylates mischarged D-aminoacyl-tRNAs. Also deacylates mischarged glycyl-tRNA(Ala), protecting cells against glycine mischarging by AlaRS. Acts via tRNA-based rather than protein-based catalysis; rejects L-amino acids rather than detecting D-amino acids in the active site. By recycling D-aminoacyl-tRNA to D-amino acids and free tRNA molecules, this enzyme counteracts the toxicity associated with the formation of D-aminoacyl-tRNA entities in vivo and helps enforce protein L-homochirality. This is D-aminoacyl-tRNA deacylase from Streptococcus pneumoniae serotype 2 (strain D39 / NCTC 7466).